The primary structure comprises 392 residues: Lysine acetyltransferase (392 aa).

It catalyses the reaction L-lysine + acetyl-CoA = N(6)-acetyl-L-lysine + CoA + H(+). It functions in the pathway amino-acid degradation; L-lysine degradation via acetylation pathway; glutarate from L-lysine: step 1/6. With respect to regulation, activity is inhibited by 5-aminovalerate. Lysine N-6-acetyl transferase (LAT) that catalyzes the first step of the lysine degradation pathway. The sequence is that of Lysine acetyltransferase from Yarrowia lipolytica (strain CLIB 122 / E 150) (Yeast).